The sequence spans 125 residues: Ribosome-binding factor A (125 aa).

The protein belongs to the RbfA family. Monomer. Binds 30S ribosomal subunits, but not 50S ribosomal subunits or 70S ribosomes.

It localises to the cytoplasm. Functionally, one of several proteins that assist in the late maturation steps of the functional core of the 30S ribosomal subunit. Associates with free 30S ribosomal subunits (but not with 30S subunits that are part of 70S ribosomes or polysomes). Required for efficient processing of 16S rRNA. May interact with the 5'-terminal helix region of 16S rRNA. This is Ribosome-binding factor A from Fervidobacterium nodosum (strain ATCC 35602 / DSM 5306 / Rt17-B1).